Reading from the N-terminus, the 448-residue chain is Cysteine--tRNA ligase (448 aa).

A Zn(2+)-binding site is contributed by C27. The 'HIGH' region signature appears at 29 to 39; sequence PTVYNYIHVGN. Zn(2+)-binding residues include C210, H235, and E239. The 'KMSKS' region motif lies at 267–271; it reads KMSKS. K270 contacts ATP.

This sequence belongs to the class-I aminoacyl-tRNA synthetase family. As to quaternary structure, monomer. Requires Zn(2+) as cofactor.

It is found in the cytoplasm. The catalysed reaction is tRNA(Cys) + L-cysteine + ATP = L-cysteinyl-tRNA(Cys) + AMP + diphosphate. This Lactococcus lactis subsp. cremoris (strain MG1363) protein is Cysteine--tRNA ligase.